The sequence spans 248 residues: tRNA pseudouridine synthase A (248 aa).

The active-site Nucleophile is the Asp-53. Tyr-111 is a binding site for substrate.

Belongs to the tRNA pseudouridine synthase TruA family. As to quaternary structure, homodimer.

The catalysed reaction is uridine(38/39/40) in tRNA = pseudouridine(38/39/40) in tRNA. Its function is as follows. Formation of pseudouridine at positions 38, 39 and 40 in the anticodon stem and loop of transfer RNAs. The polypeptide is tRNA pseudouridine synthase A (Listeria monocytogenes serotype 4b (strain CLIP80459)).